Here is a 118-residue protein sequence, read N- to C-terminus: Cell division topological specificity factor (118 aa).

Residues 86-118 (RSQAKAVSSQENGASSQEAVSSQESVSTPGAME) are disordered. A compositionally biased stretch (low complexity) spans 99–112 (ASSQEAVSSQESVS).

The protein belongs to the MinE family.

Functionally, prevents the cell division inhibition by proteins MinC and MinD at internal division sites while permitting inhibition at polar sites. This ensures cell division at the proper site by restricting the formation of a division septum at the midpoint of the long axis of the cell. The protein is Cell division topological specificity factor of Prochlorococcus marinus (strain MIT 9313).